The sequence spans 360 residues: 1-aminocyclopropane-1-carboxylate oxidase homolog 6 (360 aa).

Residues Lys-208–Ser-309 form the Fe2OG dioxygenase domain. His-232, Asp-234, and His-288 together coordinate Fe cation. Arg-299 lines the 2-oxoglutarate pocket.

The protein belongs to the iron/ascorbate-dependent oxidoreductase family. Fe(2+) is required as a cofactor. In terms of tissue distribution, constitutively expressed in leaves and blades.

This Arabidopsis thaliana (Mouse-ear cress) protein is 1-aminocyclopropane-1-carboxylate oxidase homolog 6.